Consider the following 937-residue polypeptide: Ubiquitin carboxyl-terminal hydrolase 37 (937 aa).

Positions 38 to 40 match the KEN box 1 motif; sequence RDN. 2 consecutive short sequence motifs (D-box) follow at residues 76-84 and 101-110; these read RMTLTLKDS and KEYLETVKLG. The segment covering 132-149 has biased composition (polar residues); the sequence is TAQNDSGLSPSDKQSAPR. 2 disordered regions span residues 132 to 216 and 232 to 258; these read TAQN…KAIT and QSEE…SRTG. Over residues 151-161 the composition is skewed to basic and acidic residues; it reads SSLDSREDSTP. A D-box 3 motif is present at residues 162-170; sequence RKPLGSPSR. Positions 204-206 match the KEN box 2 motif; the sequence is KEN. The USP domain occupies 322–911; sequence QGFSNLGNTC…SGYIFFYMHK (590 aa). Cys-331 (nucleophile) is an active-site residue. Over residues 609-625 the composition is skewed to polar residues; it reads NSSTLRRASQRPESSGS. 2 disordered regions span residues 609-632 and 688-710; these read NSST…DSDS and TSLC…GDAD. Positions 672–691 constitute a UIM 1 domain; sequence NDEEMLAAVLEMSRHDTSLC. The short motif at 742-744 is the KEN box 3 element; sequence KEN. 2 consecutive UIM domains span residues 766–785 and 788–807; these read REEQ…QEAR and REDD…FNNS. His-866 functions as the Proton acceptor in the catalytic mechanism.

This sequence belongs to the peptidase C19 family.

It carries out the reaction Thiol-dependent hydrolysis of ester, thioester, amide, peptide and isopeptide bonds formed by the C-terminal Gly of ubiquitin (a 76-residue protein attached to proteins as an intracellular targeting signal).. Its function is as follows. Deubiquitinase that antagonizes the anaphase-promoting complex (APC/C) during G1/S transition by mediating deubiquitination of APC/C target proteins, thereby promoting S phase entry. Specifically mediates deubiquitination of 'Lys-11'-linked polyubiquitin chains, a specific ubiquitin-linkage type mediated by the APC/C complex. The sequence is that of Ubiquitin carboxyl-terminal hydrolase 37 (usp37) from Danio rerio (Zebrafish).